We begin with the raw amino-acid sequence, 280 residues long: MSGSMYDDQYYATSRRHSLVTPPPSVAPRQNRMRSQSVRVSNGTVSTDNSMSSGRVSEATNITQPPAYSKKFVVVGDGGCGKTCLLISYSQGYFPEKYVPTVFENYITQTLHRRSGKTVELALWDTAGQEEYDRLRPLSYPETDLLFVCFAIDCPASLENVMDKWYPEVLHFCPTTPIILVGLKSDLRNKRTCIELLKTQGLTPVTPEQGQAVAGRMNASYVECSSKEMRGVDSVFQLAVDTVVSLEEQNWDTRLPSSSGKPGGKPIGGKKIKKRSCKIL.

The interval 13-59 is disordered; sequence TSRRHSLVTPPPSVAPRQNRMRSQSVRVSNGTVSTDNSMSSGRVSEA. Polar residues predominate over residues 33–59; sequence MRSQSVRVSNGTVSTDNSMSSGRVSEA. 76–83 contacts GTP; sequence GDGGCGKT. Positions 98–106 match the Effector region motif; sequence YVPTVFENY. Residues 125-129 and 183-186 each bind GTP; these read DTAGQ and LKSD. The tract at residues 251 to 275 is disordered; it reads WDTRLPSSSGKPGGKPIGGKKIKKR. A Cysteine methyl ester modification is found at Cys277. Cys277 carries S-geranylgeranyl cysteine lipidation. A propeptide spans 278-280 (removed in mature form); that stretch reads KIL.

This sequence belongs to the small GTPase superfamily. Rho family.

Its subcellular location is the cell membrane. In Emericella nidulans (strain FGSC A4 / ATCC 38163 / CBS 112.46 / NRRL 194 / M139) (Aspergillus nidulans), this protein is GTP-binding protein rhoC (rhoC).